The sequence spans 288 residues: tRNA dimethylallyltransferase (288 aa).

17-24 is an ATP binding site; sequence GPTASGKT. 19 to 24 is a substrate binding site; the sequence is TASGKT.

This sequence belongs to the IPP transferase family. In terms of assembly, monomer. Mg(2+) serves as cofactor.

It carries out the reaction adenosine(37) in tRNA + dimethylallyl diphosphate = N(6)-dimethylallyladenosine(37) in tRNA + diphosphate. Catalyzes the transfer of a dimethylallyl group onto the adenine at position 37 in tRNAs that read codons beginning with uridine, leading to the formation of N6-(dimethylallyl)adenosine (i(6)A). This Jannaschia sp. (strain CCS1) protein is tRNA dimethylallyltransferase.